The sequence spans 152 residues: Arginine repressor (152 aa).

This sequence belongs to the ArgR family.

Its subcellular location is the cytoplasm. It functions in the pathway amino-acid biosynthesis; L-arginine biosynthesis [regulation]. Regulates arginine biosynthesis genes. This chain is Arginine repressor, found in Caldicellulosiruptor saccharolyticus (strain ATCC 43494 / DSM 8903 / Tp8T 6331).